Consider the following 345-residue polypeptide: MKALVKAKREEGIWMQHDVPVPEVGVHDVMIRVTKSAICGTDVHIYNWDEWSQKTVPVPMVVGHEYVGRVERVGAEVEAFRPGERVSGEGHVTCGFCRNCRAGRRHLCRHTVGVGVNRPGSFAEYVVIPADNVYRIPDDIPDDIAAIFDPFGNATHTALSFDLVGEDVLVTGAGPIGVMAAAIARHVGARHVVVTDVNDYRLDLARRMGASRAVNVAREDLRAVMSELGMREGFDVGLEMSGNGRAFRQLLEVMNHGGRIALLGIMPGPEPIDWSQVVFKGLQLKGVYGREMYETWYKMVAMLQSGLDLSAVVTHRFSIDDFQQGFDVMRSGRSGKVVLDWGVAR.

Residue Cys-39 participates in Zn(2+) binding. Catalysis depends on charge relay system residues Thr-41 and His-44. 6 residues coordinate Zn(2+): His-64, Glu-65, Cys-94, Cys-97, Cys-100, and Cys-108. Residues Ile-176, Asp-196, Arg-201, 263-265 (LGI), and 287-288 (VY) contribute to the NAD(+) site.

This sequence belongs to the zinc-containing alcohol dehydrogenase family. In terms of assembly, homotetramer. Zn(2+) serves as cofactor.

The protein localises to the cytoplasm. The catalysed reaction is L-threonine + NAD(+) = (2S)-2-amino-3-oxobutanoate + NADH + H(+). The protein operates within amino-acid degradation; L-threonine degradation via oxydo-reductase pathway; glycine from L-threonine: step 1/2. In terms of biological role, catalyzes the NAD(+)-dependent oxidation of L-threonine to 2-amino-3-ketobutyrate. This is L-threonine 3-dehydrogenase from Anaeromyxobacter dehalogenans (strain 2CP-C).